We begin with the raw amino-acid sequence, 469 residues long: 3-isopropylmalate dehydratase large subunit 2 (469 aa).

[4Fe-4S] cluster contacts are provided by C347, C408, and C411.

This sequence belongs to the aconitase/IPM isomerase family. LeuC type 1 subfamily. In terms of assembly, heterodimer of LeuC and LeuD. [4Fe-4S] cluster is required as a cofactor.

The enzyme catalyses (2R,3S)-3-isopropylmalate = (2S)-2-isopropylmalate. The protein operates within amino-acid biosynthesis; L-leucine biosynthesis; L-leucine from 3-methyl-2-oxobutanoate: step 2/4. Catalyzes the isomerization between 2-isopropylmalate and 3-isopropylmalate, via the formation of 2-isopropylmaleate. The protein is 3-isopropylmalate dehydratase large subunit 2 of Mannheimia succiniciproducens (strain KCTC 0769BP / MBEL55E).